We begin with the raw amino-acid sequence, 911 residues long: Transferrin-binding protein A (911 aa).

The signal sequence occupies residues 1-24 (MQQQHLFRLNILCLSLMTALPAYA). Residues 38–45 (DTIQVKAK) carry the TonB box motif. Residues 51–176 (RDNEVTGLGK…LAGSVAFQTK (126 aa)) enclose the TBDR plug domain. Positions 187 to 911 (QWGIQSKTAY…NYTFSLEMKF (725 aa)) constitute a TBDR beta-barrel domain. Positions 894 to 911 (NRYAAPGRNYTFSLEMKF) match the TonB C-terminal box motif.

Belongs to the TonB-dependent receptor family. Binds both human apo- and holo-transferrin (TF), via the TF C-terminus. Forms a large complex with TF and TbpB.

The protein resides in the cell outer membrane. In terms of biological role, neisseria acquires iron by extracting it from serum transferrin (TF) in its human host. Acts as a TF receptor and is required for TF utilization. Binds both apo- and holo-TF, via the TF C-terminus. The sequence is that of Transferrin-binding protein A from Neisseria meningitidis serogroup B.